The following is a 374-amino-acid chain: C-C chemokine receptor type 2 (374 aa).

Residues 1-42 are Extracellular-facing; that stretch reads MLSTSRSRFIRNTNESGEEVTTFFDYDYGAPCHKFDVKQIGA. N-linked (GlcNAc...) asparagine glycosylation is present at asparagine 14. Tyrosine 26 bears the Sulfotyrosine mark. A helical transmembrane segment spans residues 43 to 70; that stretch reads QLLPPLYSLVFIFGFVGNMLVVLILINC. Residues 71-80 lie on the Cytoplasmic side of the membrane; it reads KKLKCLTDIY. Residues 81 to 100 traverse the membrane as a helical segment; that stretch reads LLNLAISDLLFLITLPLWAH. The Extracellular portion of the chain corresponds to 101-114; the sequence is SAANEWVFGNAMCK. A disulfide bond links cysteine 113 and cysteine 190. A helical transmembrane segment spans residues 115–136; sequence LFTGLYHIGYFGGIFFIILLTI. The Cytoplasmic portion of the chain corresponds to 137-153; that stretch reads DRYLAIVHAVFALKART. A Phosphotyrosine; by JAK2 modification is found at tyrosine 139. The helical transmembrane segment at 154 to 178 threads the bilayer; sequence VTFGVVTSVITWLVAVFASVPGIIF. The Extracellular segment spans residues 179-206; that stretch reads TKCQKEDSVYVCGPYFPRGWNNFHTIMR. A helical membrane pass occupies residues 207–226; that stretch reads NILGLVLPLLIMVICYSGIL. Over 227-243 the chain is Cytoplasmic; that stretch reads KTLLRCRNEKKRHRAVR. The chain crosses the membrane as a helical span at residues 244–268; that stretch reads VIFTIMIVYFLFWTPYNIVILLNTF. Over 269-285 the chain is Extracellular; the sequence is QEFFGLSNCESTSQLDQ. Residues 286–309 traverse the membrane as a helical segment; sequence ATQVTETLGMTHCCINPIIYAFVG. Residues 310–374 lie on the Cytoplasmic side of the membrane; that stretch reads EKFRSLFHIA…EASLQDKEGA (65 aa). The tract at residues 348 to 374 is disordered; that stretch reads QGLLDGRGKGKSIGRAPEASLQDKEGA.

Belongs to the G-protein coupled receptor 1 family. In terms of assembly, interacts with ARRB1. Interacts (via extracellular N-terminal region) with beta-defensin DEFB106A/DEFB106B; this interaction may preferentially require specific tyrosine sulfation on CCR2. Interacts with NUP85; the interaction is required for CCR2 clusters formation on the cell membrane and CCR2 signaling. As to quaternary structure, (Microbial infection) Binds to HIV-1 Tat. In terms of processing, N-glycosylated. Post-translationally, sulfation increases the affinity for both monomeric and dimeric CCL2 with stronger binding to the monomeric form. Binding of sulfated CCR2 to CCL2 promotes conversion of CCL2 from dimer to monomer. In terms of tissue distribution, expressed by monocytes and IL2-activated NK cells. Abundantly expressed on CD14+/CD16- monocytes and weakly on CD14+/CD16+ monocytes, type 2 dendritic cells (DCs) and plasmacytoid DCs (at protein level).

It is found in the cell membrane. Its function is as follows. Key functional receptor for CCL2 but can also bind CCL7, and CCL12. Also transduces signaling mediated by CCL13. Its binding with CCL2 on monocytes and macrophages mediates chemotaxis and migration induction through the activation of the PI3K cascade, the small G protein Rac and lamellipodium protrusion. Also acts as a receptor for the beta-defensin DEFB106A/DEFB106B. Regulates the expression of T-cell inflammatory cytokines and T-cell differentiation, promoting the differentiation of T-cells into T-helper 17 cells (Th17) during inflammation. Facilitates the export of mature thymocytes by enhancing directional movement of thymocytes to sphingosine-1-phosphate stimulation and up-regulation of S1P1R expression; signals through the JAK-STAT pathway to regulate FOXO1 activity leading to an increased expression of S1P1R. Plays an important role in mediating peripheral nerve injury-induced neuropathic pain. Increases NMDA-mediated synaptic transmission in both dopamine D1 and D2 receptor-containing neurons, which may be caused by MAPK/ERK-dependent phosphorylation of GRIN2B/NMDAR2B. Mediates the recruitment of macrophages and monocytes to the injury site following brain injury. (Microbial infection) Alternative coreceptor with CD4 for HIV-1 infection. The protein is C-C chemokine receptor type 2 (CCR2) of Homo sapiens (Human).